Here is a 202-residue protein sequence, read N- to C-terminus: Orotate phosphoribosyltransferase (202 aa).

5-phospho-alpha-D-ribose 1-diphosphate contacts are provided by residues lysine 93 and 113–121 (EDIITTGGS). 2 residues coordinate orotate: threonine 117 and arginine 145.

Belongs to the purine/pyrimidine phosphoribosyltransferase family. PyrE subfamily. As to quaternary structure, homodimer. The cofactor is Mg(2+).

It carries out the reaction orotidine 5'-phosphate + diphosphate = orotate + 5-phospho-alpha-D-ribose 1-diphosphate. Its pathway is pyrimidine metabolism; UMP biosynthesis via de novo pathway; UMP from orotate: step 1/2. Functionally, catalyzes the transfer of a ribosyl phosphate group from 5-phosphoribose 1-diphosphate to orotate, leading to the formation of orotidine monophosphate (OMP). The protein is Orotate phosphoribosyltransferase of Campylobacter jejuni subsp. doylei (strain ATCC BAA-1458 / RM4099 / 269.97).